Here is a 264-residue protein sequence, read N- to C-terminus: S-adenosylmethionine decarboxylase proenzyme (264 aa).

The active-site Schiff-base intermediate with substrate; via pyruvic acid is S112. S112 is subject to Pyruvic acid (Ser); by autocatalysis. The Proton acceptor; for processing activity role is filled by H117. C140 (proton donor; for catalytic activity) is an active-site residue.

Belongs to the prokaryotic AdoMetDC family. Type 2 subfamily. As to quaternary structure, heterooctamer of four alpha and four beta chains arranged as a tetramer of alpha/beta heterodimers. It depends on pyruvate as a cofactor. Is synthesized initially as an inactive proenzyme. Formation of the active enzyme involves a self-maturation process in which the active site pyruvoyl group is generated from an internal serine residue via an autocatalytic post-translational modification. Two non-identical subunits are generated from the proenzyme in this reaction, and the pyruvate is formed at the N-terminus of the alpha chain, which is derived from the carboxyl end of the proenzyme. The post-translation cleavage follows an unusual pathway, termed non-hydrolytic serinolysis, in which the side chain hydroxyl group of the serine supplies its oxygen atom to form the C-terminus of the beta chain, while the remainder of the serine residue undergoes an oxidative deamination to produce ammonia and the pyruvoyl group blocking the N-terminus of the alpha chain.

The enzyme catalyses S-adenosyl-L-methionine + H(+) = S-adenosyl 3-(methylsulfanyl)propylamine + CO2. It functions in the pathway amine and polyamine biosynthesis; S-adenosylmethioninamine biosynthesis; S-adenosylmethioninamine from S-adenosyl-L-methionine: step 1/1. Catalyzes the decarboxylation of S-adenosylmethionine to S-adenosylmethioninamine (dcAdoMet), the propylamine donor required for the synthesis of the polyamines spermine and spermidine from the diamine putrescine. This Citrobacter koseri (strain ATCC BAA-895 / CDC 4225-83 / SGSC4696) protein is S-adenosylmethionine decarboxylase proenzyme.